A 255-amino-acid chain; its full sequence is DNA repair protein RecO (255 aa).

This sequence belongs to the RecO family.

Its function is as follows. Involved in DNA repair and RecF pathway recombination. In Listeria monocytogenes serotype 4b (strain CLIP80459), this protein is DNA repair protein RecO.